Reading from the N-terminus, the 290-residue chain is Nucleoid occlusion protein (290 aa).

The segment at residues 153-172 (EALAQRLGKGQSTIANKLRL) is a DNA-binding region (H-T-H motif).

The protein belongs to the ParB family.

The protein localises to the cytoplasm. It localises to the nucleoid. Functionally, effects nucleoid occlusion by binding relatively nonspecifically to DNA and preventing the assembly of the division machinery in the vicinity of the nucleoid, especially under conditions that disturb the cell cycle. It helps to coordinate cell division and chromosome segregation by preventing the formation of the Z ring through the nucleoid, which would cause chromosome breakage. This Bacillus anthracis (strain A0248) protein is Nucleoid occlusion protein.